The sequence spans 159 residues: Ascorbate-specific PTS system EIIA component (159 aa).

The PTS EIIA type-2 domain occupies 9–152 (VLKQHHTVRL…TSLFAVIDRV (144 aa)). His-71 functions as the Tele-phosphohistidine intermediate in the catalytic mechanism. Position 71 is a phosphohistidine (His-71).

The protein localises to the cytoplasm. Functionally, the phosphoenolpyruvate-dependent sugar phosphotransferase system (sugar PTS), a major carbohydrate active transport system, catalyzes the phosphorylation of incoming sugar substrates concomitantly with their translocation across the cell membrane. The enzyme II UlaABC PTS system is involved in ascorbate transport. In Mycoplasma pneumoniae (strain ATCC 29342 / M129 / Subtype 1) (Mycoplasmoides pneumoniae), this protein is Ascorbate-specific PTS system EIIA component (ulaC).